The sequence spans 927 residues: Probable dipeptidyl-aminopeptidase B (927 aa).

Disordered stretches follow at residues 1-44 (MAPA…TTSI) and 58-101 (GHFE…KNDG). At 1–108 (MAPAPGMAPY…NDGMNRGMRR (108 aa)) the chain is on the cytoplasmic side. Basic and acidic residues-rich tracts occupy residues 19 to 36 (HRPE…HESE) and 58 to 70 (GHFE…PMKE). A helical; Signal-anchor for type II membrane protein membrane pass occupies residues 109 to 129 (TLIIVAGLLISAWVVGLFFYV). The Vacuolar segment spans residues 130–927 (SHKSYKPASQ…RSIQPILPIL (798 aa)). N-linked (GlcNAc...) asparagine glycans are attached at residues Asn365 and Asn530. Ser769 (charge relay system) is an active-site residue. The N-linked (GlcNAc...) asparagine glycan is linked to Asn828. Catalysis depends on charge relay system residues Asp846 and His879.

Belongs to the peptidase S9B family.

It is found in the vacuole membrane. It catalyses the reaction Release of an N-terminal dipeptide, Xaa-Yaa-|-Zaa-, from a polypeptide, preferentially when Yaa is Pro, provided Zaa is neither Pro nor hydroxyproline.. In terms of biological role, type IV dipeptidyl-peptidase which removes N-terminal dipeptides sequentially from polypeptides having unsubstituted N-termini provided that the penultimate residue is proline. The sequence is that of Probable dipeptidyl-aminopeptidase B (DAPB) from Podospora anserina (strain S / ATCC MYA-4624 / DSM 980 / FGSC 10383) (Pleurage anserina).